A 103-amino-acid chain; its full sequence is Cystatin-A1 (103 aa).

The Secondary area of contact motif lies at Gln51–Gly55.

This sequence belongs to the cystatin family.

The protein resides in the cytoplasm. Its function is as follows. This is an intracellular thiol proteinase inhibitor. This chain is Cystatin-A1, found in Sus scrofa (Pig).